A 581-amino-acid polypeptide reads, in one-letter code: Chaperonin GroEL 1 (581 aa).

ATP-binding positions include 29-32 (TIGP), 86-90 (DGTTT), Gly413, and Asp492.

Belongs to the chaperonin (HSP60) family. Forms a cylinder of 14 subunits composed of two heptameric rings stacked back-to-back. Interacts with the co-chaperonin GroES.

Its subcellular location is the cytoplasm. It catalyses the reaction ATP + H2O + a folded polypeptide = ADP + phosphate + an unfolded polypeptide.. Functionally, together with its co-chaperonin GroES, plays an essential role in assisting protein folding. The GroEL-GroES system forms a nano-cage that allows encapsulation of the non-native substrate proteins and provides a physical environment optimized to promote and accelerate protein folding. This Prochlorococcus marinus subsp. pastoris (strain CCMP1986 / NIES-2087 / MED4) protein is Chaperonin GroEL 1.